We begin with the raw amino-acid sequence, 153 residues long: Hsp90 co-chaperone HCH1 (153 aa).

It belongs to the AHA1 family. As to quaternary structure, monomer. Interacts with HSP82.

The protein resides in the cytoplasm. It is found in the nucleus. Its function is as follows. Co-chaperone that binds to the molecular chaperone HSP82 and stimulates its ATPase activity. Although not essential, it confers thermotolerance when intracellular levels of HSP82 are limiting. This is Hsp90 co-chaperone HCH1 (HCH1) from Saccharomyces cerevisiae (strain ATCC 204508 / S288c) (Baker's yeast).